The primary structure comprises 372 residues: D-alanine--D-alanine ligase (372 aa).

Residues 145 to 349 (KTVLRAGGIP…CPNLLDQLIE (205 aa)) form the ATP-grasp domain. 176–231 (DRWGTSELFVKAVSLGSSVATLPVKTETEFTKAVKEVFRYDDRLMVEPRIRGREIE) is an ATP binding site. Asp303, Glu316, and Asn318 together coordinate Mg(2+).

It belongs to the D-alanine--D-alanine ligase family. The cofactor is Mg(2+). It depends on Mn(2+) as a cofactor.

It is found in the cytoplasm. The enzyme catalyses 2 D-alanine + ATP = D-alanyl-D-alanine + ADP + phosphate + H(+). It functions in the pathway cell wall biogenesis; peptidoglycan biosynthesis. Cell wall formation. The chain is D-alanine--D-alanine ligase from Coxiella burnetii (strain Dugway 5J108-111).